The primary structure comprises 431 residues: Adenylosuccinate lyase (431 aa).

Residues Arg-4 to Tyr-5, Arg-67 to Asp-69, and Thr-93 to Ser-94 each bind N(6)-(1,2-dicarboxyethyl)-AMP. The active-site Proton donor/acceptor is His-141. Position 212 (Gln-212) interacts with N(6)-(1,2-dicarboxyethyl)-AMP. Ser-262 acts as the Proton donor/acceptor in catalysis. N(6)-(1,2-dicarboxyethyl)-AMP contacts are provided by residues Ser-263, Lys-268–Asn-270, Asn-276, and Ser-307–Ile-311.

The protein belongs to the lyase 1 family. Adenylosuccinate lyase subfamily. Homodimer and homotetramer. Residues from neighboring subunits contribute catalytic and substrate-binding residues to each active site.

It catalyses the reaction N(6)-(1,2-dicarboxyethyl)-AMP = fumarate + AMP. It carries out the reaction (2S)-2-[5-amino-1-(5-phospho-beta-D-ribosyl)imidazole-4-carboxamido]succinate = 5-amino-1-(5-phospho-beta-D-ribosyl)imidazole-4-carboxamide + fumarate. It functions in the pathway purine metabolism; AMP biosynthesis via de novo pathway; AMP from IMP: step 2/2. It participates in purine metabolism; IMP biosynthesis via de novo pathway; 5-amino-1-(5-phospho-D-ribosyl)imidazole-4-carboxamide from 5-amino-1-(5-phospho-D-ribosyl)imidazole-4-carboxylate: step 2/2. Functionally, catalyzes two reactions in de novo purine nucleotide biosynthesis. Catalyzes the breakdown of 5-aminoimidazole- (N-succinylocarboxamide) ribotide (SAICAR or 2-[5-amino-1-(5-phospho-beta-D-ribosyl)imidazole-4-carboxamido]succinate) to 5-aminoimidazole-4-carboxamide ribotide (AICAR or 5-amino-1-(5-phospho-beta-D-ribosyl)imidazole-4-carboxamide) and fumarate, and of adenylosuccinate (ADS or N(6)-(1,2-dicarboxyethyl)-AMP) to adenosine monophosphate (AMP) and fumarate. The chain is Adenylosuccinate lyase (purB) from Staphylococcus saprophyticus subsp. saprophyticus (strain ATCC 15305 / DSM 20229 / NCIMB 8711 / NCTC 7292 / S-41).